A 766-amino-acid polypeptide reads, in one-letter code: Serine/threonine-protein kinase B-raf (766 aa).

The span at 1–13 (MAALSGGGGGGAE) shows a compositional bias: gly residues. The interval 1 to 38 (MAALSGGGGGGAEPGQALFNGDMEPEAGAGAGAAASSA) is disordered. Ala-2 carries the post-translational modification N-acetylalanine. Ser-151 is subject to Phosphoserine. The 73-residue stretch at 155-227 (PIVRVFLPNK…TGEELHVEVL (73 aa)) folds into the RBD domain. Residues 234-280 (THNFVRKTFFTLAFCDFCRKLLFQGFRCQTCGYKFHQRCSTEVPLMC) form a Phorbol-ester/DAG-type zinc finger. 8 residues coordinate Zn(2+): His-235, Cys-248, Cys-251, Cys-261, Cys-264, His-269, Cys-272, and Cys-280. Residues 308–454 (AETALTSGSS…DSSDDWEIPD (147 aa)) are disordered. Over residues 314 to 341 (SGSSPSAPASDSIGPQILTSPSPSKSIP) the composition is skewed to low complexity. The residue at position 333 (Ser-333) is a Phosphoserine. Positions 348–363 (PADEDHRNQFGQRDRS) are enriched in basic and acidic residues. Ser-365 is subject to Phosphoserine; by SGK1. At Thr-373 the chain carries Phosphothreonine; by autocatalysis. A Phosphothreonine modification is found at Thr-396. Phosphoserine is present on Ser-399. Thr-401 bears the Phosphothreonine mark. Over residues 423 to 447 (QRERKSSSSSEDRNRMKTLGRRDSS) the composition is skewed to basic and acidic residues. Phosphoserine is present on residues Ser-446 and Ser-447. The Protein kinase domain occupies 457-717 (ITVGQRIGSG…PQILASIELL (261 aa)). Residues 463-471 (IGSGSFGTV) and Lys-483 contribute to the ATP site. Residue Asp-576 is the Proton acceptor of the active site. Lys-578 is covalently cross-linked (Glycyl lysine isopeptide (Lys-Gly) (interchain with G-Cter in ubiquitin)). At Arg-671 the chain carries Omega-N-methylarginine; by PRMT5. Phosphoserine is present on residues Ser-729 and Ser-750. Position 753 is a phosphothreonine; by MAPK1 (Thr-753).

The protein belongs to the protein kinase superfamily. TKL Ser/Thr protein kinase family. RAF subfamily. In terms of assembly, monomer. Homodimer. Heterodimerizes with RAF1, and the heterodimer possesses a highly increased kinase activity compared to the respective homodimers or monomers. Heterodimerization is mitogen-regulated and enhanced by 14-3-3 proteins. MAPK1/ERK2 activation can induce a negative feedback that promotes the dissociation of the heterodimer by phosphorylating BRAF at Thr-753. Heterodimerizes (via N-terminus) with KSR1 (via N-terminus) or KSR2 (via N-terminus) in a MAP2K1-dependent manner. Interacts with MAP2K1 and MAP2K2. Found in a complex with at least BRAF, HRAS, MAP2K1, MAPK3 and RGS14. Interacts with RIT1. Interacts (via N-terminus) with RGS14 (via RBD domains); the interaction mediates the formation of a ternary complex with RAF1, a ternary complex inhibited by GNAI1. Interacts with DGKH. Interacts with PRMT5. Interacts with KSR2. Interacts with AKAP13, MAP2K1 and KSR1. Identified in a complex with AKAP13, MAP2K1 and KSR1. Interacts with FNIP1 and FNIP2. Requires Zn(2+) as cofactor. Phosphorylation at Ser-365 by SGK1 inhibits its activity. Phosphorylation at Thr-753 by MAPK1. Dephosphorylation of Ser-365 by the SHOC2-MRAS-PP1c (SMP) complex consisting of SHOC2, GTP-bound M-Ras/MRAS and the catalytic subunit of protein phosphatase 1 (PPP1CA, PPP1CB or PPP1CC); this relieves inactivation and stimulates kinase activity. In terms of processing, methylation at Arg-671 decreases stability and kinase activity. Post-translationally, ubiquitinated by RNF149; which leads to proteasomal degradation. Polyubiquitinated at Lys-578 in response to EGF. In terms of tissue distribution, brain and testis.

It localises to the nucleus. It is found in the cytoplasm. Its subcellular location is the cell membrane. It carries out the reaction L-seryl-[protein] + ATP = O-phospho-L-seryl-[protein] + ADP + H(+). The enzyme catalyses L-threonyl-[protein] + ATP = O-phospho-L-threonyl-[protein] + ADP + H(+). With respect to regulation, in quiescent cells, maintained in an inactive state via an intramolecular interaction between the protein kinase and N-terminal domains. Following mitogen-mediated cell activation, binds via its RGB domain to active HRAS (GTP-bound) which releases the inhibitory intramolecular interaction between the two domains. This allows the MAP2K1-mediated dimerization of KSR1 or KSR2, and BRAF which activates BRAF. Its function is as follows. Protein kinase involved in the transduction of mitogenic signals from the cell membrane to the nucleus. Phosphorylates MAP2K1, and thereby activates the MAP kinase signal transduction pathway. Phosphorylates PFKFB2. May play a role in the postsynaptic responses of hippocampal neurons. This Homo sapiens (Human) protein is Serine/threonine-protein kinase B-raf.